Reading from the N-terminus, the 898-residue chain is Interleukin enhancer-binding factor 3-B (898 aa).

The DZF domain maps to 5–379 (RIFLNDDRHV…ALKRPIEEDG (375 aa)). Disordered stretches follow at residues 52 to 87 (QEKD…NPTR), 374 to 403 (PIEE…PPQA), 468 to 529 (LPTG…VMEL), 627 to 651 (PPPQ…RGGF), and 711 to 799 (GEGY…QGAA). Positions 61–71 (ENPEPEETETT) are enriched in acidic residues. 2 stretches are compositionally biased toward basic and acidic residues: residues 72 to 81 (EEGKDSEAKT) and 374 to 384 (PIEEDGEDKSP). The short motif at 372–390 (KRPIEEDGEDKSPSKKKKK) is the Bipartite nuclear localization signal element. One can recognise a DRBM 1 domain in the interval 399 to 468 (EPPQAMNALM…AVKVLQDMGL (70 aa)). Residues 474–483 (EKEESVDESE) show a composition bias toward acidic residues. The span at 489–513 (QTPSQTADSEQADSSAGDQSESGKQ) shows a compositional bias: polar residues. A DRBM 2 domain is found at 521-587 (HGKNPVMELN…ALSALEKLFP (67 aa)). The span at 637–651 (RGGMNRGRGRGRGGF) shows a compositional bias: gly residues. The segment covering 717-747 (PTPPKPFVKKPPPPQQQQQPPPQHASNPPKP) has biased composition (pro residues). Residues 749-782 (YNQGYQGHQGGQQQQQPQQQQQQTYNQNQYSNYG) show a composition bias toward low complexity.

A component of a ybx2/frgy2-containing mRNA-ribonucleoprotein (mRNP) complex. Also a component of the CCAAT box transcription factor (CBTF) complex. Post-translationally, phosphorylated. Phosphorylation affects nuclear translocation. In terms of processing, methylated by protein arginine N-methyltransferase 1 (prmt1b) in the RGG-rich domain. Methylation decreases DNA-binding and thereby decreases transcription of the gata2 gene, but does not regulate dsRNA binding or subcellular localization.

The protein resides in the nucleus. Its subcellular location is the cytoplasm. In terms of biological role, RNA-binding protein that plays an essential role in the biogenesis of circular RNAs (circRNAs) which are produced by back-splicing circularization of pre-mRNAs. Within the nucleus, promotes circRNAs processing by stabilizing the regulatory elements residing in the flanking introns of the circularized exons. Plays thereby a role in the back-splicing of a subset of circRNAs. As a consequence, participates in a wide range of transcriptional and post-transcriptional processes. Binds to poly-U elements and AU-rich elements (AREs) in the 3'-UTR of target mRNAs. Upon viral infection, ILF3 accumulates in the cytoplasm and participates in the innate antiviral response. Mechanistically, ILF3 becomes phosphorylated and activated by the double-stranded RNA-activated protein kinase/PKR which releases ILF3 from cellular mature circRNAs. In turn, unbound ILF3 molecules are able to interact with and thus inhibit viral mRNAs. Has a cytoplasmic role early in development as part of a ribonucleoprotein (mRNP) complex which may regulate mRNA transport and/or translation. Following nuclear localization at the mid-blastula transition, acts as a transcription factor and binds the 5'-CCAAT-3' promoter sequence to regulate transcription of the gata2 gene as a subunit of the CCAAT box transcription factor (CBTF). Its role as an mRNP component negatively regulates its activity as a transcription factor by precluding its nuclear localization. In Xenopus laevis (African clawed frog), this protein is Interleukin enhancer-binding factor 3-B (ilf3-b).